A 241-amino-acid chain; its full sequence is Large ribosomal subunit protein uL3 (241 aa).

2 disordered regions span residues 140 to 168 (SHRS…HMGD) and 216 to 241 (APKP…EEGA). An N5-methylglutamine modification is found at Q151.

It belongs to the universal ribosomal protein uL3 family. In terms of assembly, part of the 50S ribosomal subunit. Forms a cluster with proteins L14 and L19. In terms of processing, methylated by PrmB.

One of the primary rRNA binding proteins, it binds directly near the 3'-end of the 23S rRNA, where it nucleates assembly of the 50S subunit. This is Large ribosomal subunit protein uL3 from Xanthobacter autotrophicus (strain ATCC BAA-1158 / Py2).